A 292-amino-acid polypeptide reads, in one-letter code: Large ribosomal subunit protein bL19m (292 aa).

Residues 41-60 (SRFQSTGPSEPGGFKPPPKP) form a disordered region. Position 77 is a phosphoserine (S77).

This sequence belongs to the bacterial ribosomal protein bL19 family. As to quaternary structure, component of the mitochondrial ribosome large subunit (39S) which comprises a 16S rRNA and about 50 distinct proteins.

The protein localises to the mitochondrion. This Mus musculus (Mouse) protein is Large ribosomal subunit protein bL19m (Mrpl19).